The primary structure comprises 176 residues: ATP-dependent protease subunit HslV (176 aa).

The active site involves T2. Positions 157, 160, and 163 each coordinate Na(+).

It belongs to the peptidase T1B family. HslV subfamily. As to quaternary structure, a double ring-shaped homohexamer of HslV is capped on each side by a ring-shaped HslU homohexamer. The assembly of the HslU/HslV complex is dependent on binding of ATP.

The protein resides in the cytoplasm. It carries out the reaction ATP-dependent cleavage of peptide bonds with broad specificity.. With respect to regulation, allosterically activated by HslU binding. In terms of biological role, protease subunit of a proteasome-like degradation complex believed to be a general protein degrading machinery. The polypeptide is ATP-dependent protease subunit HslV (Salmonella gallinarum (strain 287/91 / NCTC 13346)).